Reading from the N-terminus, the 163-residue chain is Cyanate hydratase (163 aa).

Catalysis depends on residues R103, E106, and S129.

It belongs to the cyanase family.

It carries out the reaction cyanate + hydrogencarbonate + 3 H(+) = NH4(+) + 2 CO2. Functionally, catalyzes the reaction of cyanate with bicarbonate to produce ammonia and carbon dioxide. In Paracoccidioides lutzii (strain ATCC MYA-826 / Pb01) (Paracoccidioides brasiliensis), this protein is Cyanate hydratase.